A 697-amino-acid chain; its full sequence is Long-chain-fatty-acid--CoA ligase 6 (697 aa).

Residues Leu25–Thr45 traverse the membrane as a helical; Signal-anchor for type III membrane protein segment. The Cytoplasmic portion of the chain corresponds to His46–Met697.

The protein belongs to the ATP-dependent AMP-binding enzyme family. The cofactor is Mg(2+). As to expression, expressed predominantly in brain and, to a much lesser extent, in heart and adrenal.

It localises to the mitochondrion outer membrane. The protein resides in the peroxisome membrane. It is found in the microsome membrane. Its subcellular location is the endoplasmic reticulum membrane. It carries out the reaction a long-chain fatty acid + ATP + CoA = a long-chain fatty acyl-CoA + AMP + diphosphate. The enzyme catalyses (5Z,8Z,11Z,14Z)-eicosatetraenoate + ATP + CoA = (5Z,8Z,11Z,14Z)-eicosatetraenoyl-CoA + AMP + diphosphate. It catalyses the reaction 15-hydroxy-(5Z,8Z,11Z,13E)-eicosatetraenoate + ATP + CoA = 15-hydroxy-(5Z,8Z,11Z,13E)-eicosatetraenoyl-CoA + AMP + diphosphate. The catalysed reaction is 12-hydroxy-(5Z,8Z,10E,14Z)-eicosatetraenoate + ATP + CoA = 12-hydroxy-(5Z,8Z,10E,14Z)-eicosatetraenoyl-CoA + AMP + diphosphate. It carries out the reaction 5-hydroxy-(6E,8Z,11Z,14Z)-eicosatetraenoate + ATP + CoA = 5-hydroxy-(6E,8Z,11Z,14Z)-eicosatetraenoyl-CoA + AMP + diphosphate. The enzyme catalyses hexadecanoate + ATP + CoA = hexadecanoyl-CoA + AMP + diphosphate. It catalyses the reaction (E)-hexadec-2-enoate + ATP + CoA = (2E)-hexadecenoyl-CoA + AMP + diphosphate. In terms of biological role, catalyzes the conversion of long-chain fatty acids to their active form acyl-CoA for both synthesis of cellular lipids, and degradation via beta-oxidation. Plays an important role in fatty acid metabolism in brain and the acyl-CoAs produced may be utilized exclusively for the synthesis of the brain lipid. The chain is Long-chain-fatty-acid--CoA ligase 6 from Rattus norvegicus (Rat).